Consider the following 320-residue polypeptide: Foldase protein PrsA (320 aa).

An N-terminal signal peptide occupies residues 1 to 20; sequence MKMINKLIVPVTASALLLGA. Cys21 carries the N-palmitoyl cysteine lipid modification. The S-diacylglycerol cysteine moiety is linked to residue Cys21. The 107-residue stretch at 139–245 folds into the PpiC domain; that stretch reads EDSKKASHIL…FGYHIIKADK (107 aa). The tract at residues 159 to 198 is disordered; sequence EGLDDKEAKQKAEEIQKEVSKDPSKFGEIAKKESMDTGSA.

The protein belongs to the PrsA family.

The protein resides in the cell membrane. The catalysed reaction is [protein]-peptidylproline (omega=180) = [protein]-peptidylproline (omega=0). Its function is as follows. Plays a major role in protein secretion by helping the post-translocational extracellular folding of several secreted proteins. The chain is Foldase protein PrsA from Staphylococcus aureus (strain MRSA252).